Consider the following 189-residue polypeptide: Large ribosomal subunit protein bL9 (189 aa).

The protein belongs to the bacterial ribosomal protein bL9 family.

Functionally, binds to the 23S rRNA. This Methylocella silvestris (strain DSM 15510 / CIP 108128 / LMG 27833 / NCIMB 13906 / BL2) protein is Large ribosomal subunit protein bL9.